Consider the following 56-residue polypeptide: Potassium channel toxin alpha-KTx 9.2 (56 aa).

An N-terminal signal peptide occupies residues 1–28 (MSRLFTLVLIVLAMNVMMAIISDPVVEA). Cystine bridges form between Cys31/Cys47, Cys34/Cys52, and Cys38/Cys54.

As to expression, expressed by the venom gland.

The protein localises to the secreted. In terms of biological role, blocks small conductance calcium-activated potassium channels (KCNN, SK). Low toxicity by intracerebroventricular injection into mice. In Olivierus martensii (Manchurian scorpion), this protein is Potassium channel toxin alpha-KTx 9.2.